Reading from the N-terminus, the 245-residue chain is 1-(5-phosphoribosyl)-5-[(5-phosphoribosylamino)methylideneamino] imidazole-4-carboxamide isomerase (245 aa).

Catalysis depends on Asp-7, which acts as the Proton acceptor. Asp-129 acts as the Proton donor in catalysis.

It belongs to the HisA/HisF family.

Its subcellular location is the cytoplasm. The catalysed reaction is 1-(5-phospho-beta-D-ribosyl)-5-[(5-phospho-beta-D-ribosylamino)methylideneamino]imidazole-4-carboxamide = 5-[(5-phospho-1-deoxy-D-ribulos-1-ylimino)methylamino]-1-(5-phospho-beta-D-ribosyl)imidazole-4-carboxamide. Its pathway is amino-acid biosynthesis; L-histidine biosynthesis; L-histidine from 5-phospho-alpha-D-ribose 1-diphosphate: step 4/9. This chain is 1-(5-phosphoribosyl)-5-[(5-phosphoribosylamino)methylideneamino] imidazole-4-carboxamide isomerase, found in Escherichia coli O81 (strain ED1a).